A 1131-amino-acid polypeptide reads, in one-letter code: Activity-dependent neuroprotector homeobox protein 2 (1131 aa).

Residues 73–96 (YCCGLCKYSTKVLTSFKNHLHRYH) form a C2H2-type 1 zinc finger. A C2H2-type 2; degenerate zinc finger spans residues 106–128 (IPCPNCVFASQPKVVGRHFRMFH). Glycyl lysine isopeptide (Lys-Gly) (interchain with G-Cter in SUMO2) cross-links involve residues Lys118 and Lys146. The C2H2-type 3; degenerate zinc finger occupies 155–178 (FTCLKCNFSNTLYYSMKKHVLVAH). A C2H2-type 4 zinc finger spans residues 215–240 (YYCKKCNANASSQDALMYHILTSDIH). Residues 274-285 (LAAPANGSAPSA) show a composition bias toward low complexity. The tract at residues 274–329 (LAAPANGSAPSAPAQPPCFHLALPQNSPSPAAGQPVTVAQGAPGSLTHSPPAAGQS) is disordered. Residues 694 to 716 (KTCPVCNELFPSNVYQVHMEVAH) form a C2H2-type 5; degenerate zinc finger. The segment at 747–768 (VRCLSCKCLVSEEELIHHLLMH) adopts a C2H2-type 6; degenerate zinc-finger fold. 2 C2H2-type zinc fingers span residues 770-793 (LGCL…RNRH) and 875-898 (STCP…KERH). The segment at 913-937 (FKCIHCCGVYTGNMTLAAIAVHLVR) adopts a C2H2-type 9; degenerate zinc-finger fold. Residues Lys979 and Lys1018 each participate in a glycyl lysine isopeptide (Lys-Gly) (interchain with G-Cter in SUMO2) cross-link. Ser1024 carries the phosphoserine modification. Lys1032 is covalently cross-linked (Glycyl lysine isopeptide (Lys-Gly) (interchain with G-Cter in SUMO1); alternate). Lys1032 is covalently cross-linked (Glycyl lysine isopeptide (Lys-Gly) (interchain with G-Cter in SUMO2); alternate). A DNA-binding region (homeobox) is located at residues 1043 to 1102 (PKKYEGRSYEEKKQFLKDYFHKKPYPSKKEIELLSSLFWVWKIDVASFFGKRRYICMKAI).

The protein belongs to the krueppel C2H2-type zinc-finger protein family. In terms of assembly, may interact with SMARCA4/BRG1.

Its subcellular location is the nucleus. May be involved in transcriptional regulation. May play a role in neuronal function; perhaps involved in protection of brain tissues from oxidative stress. May be involved in erythroid differentiation. The sequence is that of Activity-dependent neuroprotector homeobox protein 2 (ADNP2) from Homo sapiens (Human).